The primary structure comprises 164 residues: B-phycoerythrin alpha chain (164 aa).

Cys82 and Cys139 together coordinate (2R,3E)-phycoerythrobilin.

It belongs to the phycobiliprotein family. As to quaternary structure, heteromer of 6 alpha, 6 beta and one gamma chain. Post-translationally, contains two covalently linked bilin chromophores.

It is found in the plastid. Its subcellular location is the chloroplast thylakoid membrane. Functionally, light-harvesting photosynthetic bile pigment-protein from the phycobiliprotein complex. This chain is B-phycoerythrin alpha chain (cpeA), found in Porphyridium sordidum (Red alga).